We begin with the raw amino-acid sequence, 125 residues long: Fluoride-specific ion channel FluC (125 aa).

The next 4 helical transmembrane spans lie at 3–23 (FILI…VSKV), 33–53 (IPLG…FVLF), 65–85 (FVLF…TFAY), and 99–119 (LVYF…GMVL). Residues Gly-75 and Thr-78 each coordinate Na(+).

The protein belongs to the fluoride channel Fluc/FEX (TC 1.A.43) family.

It is found in the cell inner membrane. The catalysed reaction is fluoride(in) = fluoride(out). Its activity is regulated as follows. Na(+) is not transported, but it plays an essential structural role and its presence is essential for fluoride channel function. Fluoride-specific ion channel. Important for reducing fluoride concentration in the cell, thus reducing its toxicity. This Thermosipho melanesiensis (strain DSM 12029 / CIP 104789 / BI429) protein is Fluoride-specific ion channel FluC.